The sequence spans 349 residues: Hydroxymethylglutaryl-CoA synthase (349 aa).

(3S)-3-hydroxy-3-methylglutaryl-CoA contacts are provided by Asp-29 and Ala-30. Glu-81 acts as the Proton donor/acceptor in catalysis. (3S)-3-hydroxy-3-methylglutaryl-CoA-binding residues include Cys-113 and Thr-154. Cys-113 functions as the Acyl-thioester intermediate in the catalytic mechanism. Arg-202 serves as a coordination point for CoA. Positions 204 and 237 each coordinate (3S)-3-hydroxy-3-methylglutaryl-CoA. Catalysis depends on His-237, which acts as the Proton donor/acceptor. Lys-242 contributes to the CoA binding site. Positions 246, 269, and 299 each coordinate (3S)-3-hydroxy-3-methylglutaryl-CoA.

Belongs to the thiolase-like superfamily. Archaeal HMG-CoA synthase family. In terms of assembly, interacts with acetoacetyl-CoA thiolase that catalyzes the precedent step in the pathway and with a DUF35 protein. The acetoacetyl-CoA thiolase/HMG-CoA synthase complex channels the intermediate via a fused CoA-binding site, which allows for efficient coupling of the endergonic thiolase reaction with the exergonic HMGCS reaction.

It catalyses the reaction acetoacetyl-CoA + acetyl-CoA + H2O = (3S)-3-hydroxy-3-methylglutaryl-CoA + CoA + H(+). It participates in metabolic intermediate biosynthesis; (R)-mevalonate biosynthesis; (R)-mevalonate from acetyl-CoA: step 2/3. Functionally, catalyzes the condensation of acetyl-CoA with acetoacetyl-CoA to form 3-hydroxy-3-methylglutaryl-CoA (HMG-CoA). Functions in the mevalonate (MVA) pathway leading to isopentenyl diphosphate (IPP), a key precursor for the biosynthesis of isoprenoid compounds that are building blocks of archaeal membrane lipids. The protein is Hydroxymethylglutaryl-CoA synthase of Methanosarcina acetivorans (strain ATCC 35395 / DSM 2834 / JCM 12185 / C2A).